A 92-amino-acid polypeptide reads, in one-letter code: Small ribosomal subunit protein bS20 (92 aa).

The protein belongs to the bacterial ribosomal protein bS20 family.

In terms of biological role, binds directly to 16S ribosomal RNA. This chain is Small ribosomal subunit protein bS20, found in Rickettsia conorii (strain ATCC VR-613 / Malish 7).